A 736-amino-acid chain; its full sequence is Putative ATP-dependent RNA helicase CG14443 (736 aa).

4 disordered regions span residues 32–58, 73–166, 183–237, and 265–296; these read TKSSIWGSSASDISGQSRSLKSSSSVL, GIEG…GERP, NSFK…NSWR, and SFTRSRSPHRNTLCYQDQSKNPSRPSNYNTWK. Composition is skewed to low complexity over residues 34–58 and 125–160; these read SSIWGSSASDISGQSRSLKSSSSVL and SSESAHSSGSESSSSDSNSGSSSDSDSTTGSSSHGS. A compositionally biased stretch (basic and acidic residues) spans 190 to 199; sequence TSRENKESRS. Residues 277-296 show a composition bias toward polar residues; it reads LCYQDQSKNPSRPSNYNTWK. The Q motif motif lies at 330-358; that stretch reads LSFERSGFNATILQQLEDQGYDGPTPIQA. Positions 361-534 constitute a Helicase ATP-binding domain; that stretch reads WSIAKEGKNI…NKFLGQYTAI (174 aa). Residue 374–381 participates in ATP binding; sequence SGKGTGKT. The short motif at 482–485 is the DEAD box element; the sequence is DNID. A Helicase C-terminal domain is found at 561–719; it reads KVERLMKELT…LLQLAEEKMF (159 aa).

The protein belongs to the DEAD box helicase family.

The enzyme catalyses ATP + H2O = ADP + phosphate + H(+). Probable ATP-binding RNA helicase. This Drosophila melanogaster (Fruit fly) protein is Putative ATP-dependent RNA helicase CG14443.